A 680-amino-acid chain; its full sequence is Oligopeptidase A (680 aa).

Histidine 469 serves as a coordination point for Zn(2+). The active site involves glutamate 470. Residues histidine 473 and histidine 476 each coordinate Zn(2+).

It belongs to the peptidase M3 family. The cofactor is Zn(2+).

The catalysed reaction is Hydrolysis of oligopeptides, with broad specificity. Gly or Ala commonly occur as P1 or P1' residues, but more distant residues are also important, as is shown by the fact that Z-Gly-Pro-Gly-|-Gly-Pro-Ala is cleaved, but not Z-(Gly)(5).. In terms of biological role, may play a specific role in the degradation of signal peptides after they are released from precursor forms of secreted proteins. Can cleave N-acetyl-L-Ala(4). The polypeptide is Oligopeptidase A (prlC) (Salmonella typhimurium (strain LT2 / SGSC1412 / ATCC 700720)).